The chain runs to 407 residues: Putative D-cysteine desulfhydrase 2, mitochondrial (407 aa).

A mitochondrion-targeting transit peptide spans 1–34 (MRPSPALAGGGRTVANLLSATEWMLPSPATQVHT). Residues 39–72 (PSHSPPSPPHHFAFSNLTTAPKRNGGKGEEEGRP) are disordered. Lys90 carries the N6-(pyridoxal phosphate)lysine modification.

Belongs to the ACC deaminase/D-cysteine desulfhydrase family. Pyridoxal 5'-phosphate serves as cofactor.

The protein resides in the mitochondrion. It carries out the reaction D-cysteine + H2O = hydrogen sulfide + pyruvate + NH4(+) + H(+). Functionally, catalyzes the production of hydrogen sulfide (H2S) from cysteine. The protein is Putative D-cysteine desulfhydrase 2, mitochondrial of Oryza sativa subsp. japonica (Rice).